We begin with the raw amino-acid sequence, 278 residues long: uncharacterized protein (278 aa).

NAD(+) is bound by residues 112-113, 191-193, and Asp217; these read HI and VGR. Arg193 is an active-site residue. Glu222 is an active-site residue. The Proton donor role is filled by His241. 241–244 provides a ligand contact to NAD(+); sequence HSAG.

The protein belongs to the D-isomer specific 2-hydroxyacid dehydrogenase family.

This is an uncharacterized protein from Streptomyces coelicolor.